Reading from the N-terminus, the 309-residue chain is Homoserine O-acetyltransferase (309 aa).

Cys142 serves as the catalytic Acyl-thioester intermediate. Lys163 and Ser192 together coordinate substrate. His235 functions as the Proton acceptor in the catalytic mechanism. The active site involves Glu237. Arg249 lines the substrate pocket.

It belongs to the MetA family.

It is found in the cytoplasm. The catalysed reaction is L-homoserine + acetyl-CoA = O-acetyl-L-homoserine + CoA. It participates in amino-acid biosynthesis; L-methionine biosynthesis via de novo pathway; O-acetyl-L-homoserine from L-homoserine: step 1/1. Functionally, transfers an acetyl group from acetyl-CoA to L-homoserine, forming acetyl-L-homoserine. This Methanomethylophilus alvi (strain Mx1201) protein is Homoserine O-acetyltransferase.